Reading from the N-terminus, the 178-residue chain is Large ribosomal subunit protein uL5 (178 aa).

Belongs to the universal ribosomal protein uL5 family. Part of the 50S ribosomal subunit; part of the 5S rRNA/L5/L18/L25 subcomplex. Contacts the 5S rRNA and the P site tRNA. Forms a bridge to the 30S subunit in the 70S ribosome.

This is one of the proteins that bind and probably mediate the attachment of the 5S RNA into the large ribosomal subunit, where it forms part of the central protuberance. In the 70S ribosome it contacts protein S13 of the 30S subunit (bridge B1b), connecting the 2 subunits; this bridge is implicated in subunit movement. Contacts the P site tRNA; the 5S rRNA and some of its associated proteins might help stabilize positioning of ribosome-bound tRNAs. This is Large ribosomal subunit protein uL5 from Aliivibrio fischeri (strain ATCC 700601 / ES114) (Vibrio fischeri).